The primary structure comprises 326 residues: Ras association domain-containing protein 2 (326 aa).

A disordered region spans residues 111–133 (EVDAPPEGDQMPSSTDSRGLKPL). The Ras-associating domain maps to 176–264 (YNHKTSVFTP…SKVFLMEKDQ (89 aa)). Residues 272 to 319 (VAQYIKFEMPVLKSFIQKLQEEEDREVKKLMRKYTVLRLMIRQRLEEI) form the SARAH domain.

As to quaternary structure, interacts directly with activated KRAS in a GTP-dependent manner. Interacts (via SARAH domain) with STK3/MST2 and STK4/MST1. In terms of processing, phosphorylated by STK3/MST2 and STK4/MST1. In terms of tissue distribution, widely expressed with highest levels in brain, placenta, peripheral blood and lung. Frequently down-regulated in lung tumor cell lines.

Its subcellular location is the nucleus. It localises to the cytoplasm. It is found in the chromosome. The protein resides in the centromere. The protein localises to the kinetochore. Its function is as follows. Potential tumor suppressor. Acts as a KRAS-specific effector protein. May promote apoptosis and cell cycle arrest. Stabilizes STK3/MST2 by protecting it from proteasomal degradation. This is Ras association domain-containing protein 2 (RASSF2) from Homo sapiens (Human).